A 454-amino-acid polypeptide reads, in one-letter code: F-box/WD-40 repeat-containing protein At3g52030 (454 aa).

The F-box domain occupies Pro-20 to Ser-66. WD repeat units follow at residues Asp-85 to Ala-116, His-117 to Glu-153, Ser-170 to Pro-214, Ser-215 to Ile-255, Thr-258 to Thr-296, Ile-301 to Glu-340, Val-343 to Arg-383, and Lys-422 to Ser-454.

This chain is F-box/WD-40 repeat-containing protein At3g52030, found in Arabidopsis thaliana (Mouse-ear cress).